The primary structure comprises 231 residues: UPF0758 protein aq_1610 (231 aa).

The 122-residue stretch at 110-231 folds into the MPN domain; it reads SIRNPQEAFE…YFSFREEGVL (122 aa). Zn(2+)-binding residues include His180, His182, and Asp193. The JAMM motif motif lies at 180–193; the sequence is HNHPQGEPSPSNED.

The protein belongs to the UPF0758 family.

This is UPF0758 protein aq_1610 from Aquifex aeolicus (strain VF5).